Reading from the N-terminus, the 208-residue chain is Ras-related protein RABH1b (208 aa).

GTP is bound at residue 16–23; it reads GDQSVGKT. Positions 38 to 46 match the Effector region motif; that stretch reads YQATIGIDF. GTP is bound by residues 64–68, 122–125, and 152–153; these read DTAGQ, NKTD, and SA. Residues Cys-206 and Cys-208 are each lipidated (S-geranylgeranyl cysteine). Position 208 is a cysteine methyl ester (Cys-208).

It belongs to the small GTPase superfamily. Rab family. As to quaternary structure, interacts with the C-terminus of GC5, but not with GC3. As to expression, expressed in roots, stems, leaves and flowers.

It is found in the golgi apparatus membrane. The protein localises to the cytoplasm. It localises to the cytosol. Its function is as follows. Protein transport. Regulator of membrane traffic from the Golgi apparatus towards the endoplasmic reticulum (ER). Binds GTP and GDP and possesses intrinsic GTPase activity. The chain is Ras-related protein RABH1b (RABH1B) from Arabidopsis thaliana (Mouse-ear cress).